Consider the following 269-residue polypeptide: Glutamate racemase (269 aa).

Substrate contacts are provided by residues 11 to 12 (DS) and 43 to 44 (YG). C74 serves as the catalytic Proton donor/acceptor. Position 75 to 76 (75 to 76 (NT)) interacts with substrate. The active-site Proton donor/acceptor is the C185. Position 186–187 (186–187 (TH)) interacts with substrate.

This sequence belongs to the aspartate/glutamate racemases family.

It carries out the reaction L-glutamate = D-glutamate. The protein operates within cell wall biogenesis; peptidoglycan biosynthesis. Its function is as follows. Provides the (R)-glutamate required for cell wall biosynthesis. The chain is Glutamate racemase from Bacillus cereus (strain G9842).